The chain runs to 503 residues: Guanosine-5'-triphosphate,3'-diphosphate pyrophosphatase (503 aa).

Belongs to the GppA/Ppx family. GppA subfamily.

It catalyses the reaction guanosine 3'-diphosphate 5'-triphosphate + H2O = guanosine 3',5'-bis(diphosphate) + phosphate + H(+). The protein operates within purine metabolism; ppGpp biosynthesis; ppGpp from GTP: step 2/2. Functionally, catalyzes the conversion of pppGpp to ppGpp. Guanosine pentaphosphate (pppGpp) is a cytoplasmic signaling molecule which together with ppGpp controls the 'stringent response', an adaptive process that allows bacteria to respond to amino acid starvation, resulting in the coordinated regulation of numerous cellular activities. The sequence is that of Guanosine-5'-triphosphate,3'-diphosphate pyrophosphatase from Pseudoalteromonas atlantica (strain T6c / ATCC BAA-1087).